The primary structure comprises 207 residues: Outer-membrane lipoprotein LolB (207 aa).

An N-terminal signal peptide occupies residues 1–21 (MPLPDFRLIRLLPLAALVLTA). Cys22 carries N-palmitoyl cysteine lipidation. Residue Cys22 is the site of S-diacylglycerol cysteine attachment.

Belongs to the LolB family. As to quaternary structure, monomer.

The protein resides in the cell outer membrane. Its function is as follows. Plays a critical role in the incorporation of lipoproteins in the outer membrane after they are released by the LolA protein. The polypeptide is Outer-membrane lipoprotein LolB (Escherichia coli O7:K1 (strain IAI39 / ExPEC)).